The sequence spans 74 residues: ATP synthase subunit c (74 aa).

Helical transmembrane passes span 8-28 (FIGT…VSNI) and 52-72 (IGAG…MLLI).

It belongs to the ATPase C chain family. In terms of assembly, F-type ATPases have 2 components, F(1) - the catalytic core - and F(0) - the membrane proton channel. F(1) has five subunits: alpha(3), beta(3), gamma(1), delta(1), epsilon(1). F(0) has three main subunits: a(1), b(2) and c(10-14). The alpha and beta chains form an alternating ring which encloses part of the gamma chain. F(1) is attached to F(0) by a central stalk formed by the gamma and epsilon chains, while a peripheral stalk is formed by the delta and b chains.

It is found in the cell inner membrane. Its function is as follows. F(1)F(0) ATP synthase produces ATP from ADP in the presence of a proton or sodium gradient. F-type ATPases consist of two structural domains, F(1) containing the extramembraneous catalytic core and F(0) containing the membrane proton channel, linked together by a central stalk and a peripheral stalk. During catalysis, ATP synthesis in the catalytic domain of F(1) is coupled via a rotary mechanism of the central stalk subunits to proton translocation. Functionally, key component of the F(0) channel; it plays a direct role in translocation across the membrane. A homomeric c-ring of between 10-14 subunits forms the central stalk rotor element with the F(1) delta and epsilon subunits. This is ATP synthase subunit c from Rickettsia conorii (strain ATCC VR-613 / Malish 7).